We begin with the raw amino-acid sequence, 1664 residues long: MYND-type zinc finger-containing chromatin reader Zmynd8 (1664 aa).

Low complexity-rich tracts occupy residues 1 to 16 (MEST…SLKS), 30 to 40 (SPQPQLQSSSL), and 61 to 84 (SAPP…INVG). 3 disordered regions span residues 1–84 (MEST…INVG), 251–271 (SLSN…LRSE), and 295–323 (LALN…KTPE). Residues 258 to 271 (NDDKGPRRSNLRSE) show a composition bias toward basic and acidic residues. Residues 296–308 (ALNTSGEGESSLF) show a composition bias toward polar residues. Over residues 309-320 (SDASDTKTTTAK) the composition is skewed to low complexity. The PHD-type zinc-finger motif lies at 343-389 (DPFCWKCRGCGKLMPCSKCLRSFHSYCVRPATTKFDSSWKCPECQVI). Zn(2+) is bound by residues Cys346, Cys349, Cys358, Cys361, His366, Cys369, Cys383, and Cys386. Positions 401 to 504 (VSVDLLSQLL…KVCRQEANEI (104 aa)) constitute a Bromo domain. Zn(2+) contacts are provided by Cys507, Cys510, and Cys525. Positions 528–579 (PHLLLWAKLKGFPYWPAKAMGSSNSTLVNVRFFGKHDRAFVPVKDCFLYSAQ) constitute a PWWP domain. 4 disordered regions span residues 672 to 693 (KTKA…KKLS), 747 to 815 (ESVE…QNEN), 857 to 905 (KIPR…RQQE), and 919 to 1139 (TEVM…TNTS). A compositionally biased stretch (polar residues) spans 676–690 (TESGNESDQSPSPTK). The span at 775–784 (HKRKSKHARK) shows a compositional bias: basic residues. Residues 785–800 (QHDNQDNQIEEAEKTG) show a composition bias toward basic and acidic residues. Residues 874-884 (IPLPTAPPPKQ) are compositionally biased toward pro residues. The span at 935 to 952 (PANQPQTDQVPLQQETIT) shows a compositional bias: polar residues. A compositionally biased stretch (low complexity) spans 953–962 (AQPESQMPAA). Pro residues predominate over residues 1006–1019 (PPMPLPMPPPPPLP). Over residues 1037-1053 (TTIQRVSQKQGGKSTDT) the composition is skewed to polar residues. The segment covering 1073–1097 (SPTHSPLLSTAPSPSASPKPTSTLA) has biased composition (low complexity). Cys1399, Cys1402, Cys1410, Cys1411, Cys1417, Cys1421, His1429, and Cys1433 together coordinate Zn(2+). The segment at 1399–1433 (CANCMREAQLYCCWNTSYCDYPCQQLHWPGHSATC) adopts an MYND-type zinc-finger fold. Residues 1613–1648 (VPKATGRSGKNNSRMRQTYSNNINNSNPQGMRCNNN) are disordered. Over residues 1620–1648 (SGKNNSRMRQTYSNNINNSNPQGMRCNNN) the composition is skewed to polar residues.

The protein localises to the nucleus. Its subcellular location is the chromosome. Its function is as follows. Chromatin reader that recognizes specific histone signatures to regulate transcription. Plays a role in neuronal development. This is MYND-type zinc finger-containing chromatin reader Zmynd8 from Drosophila melanogaster (Fruit fly).